The primary structure comprises 369 residues: Glycine oxidase (369 aa).

Residues 14–15 (II), 34–35 (ES), 42–43 (AT), 47–49 (AGM), and Val174 each bind FAD. The substrate site is built by Arg302 and Arg329. 327 to 333 (HFRNGIL) contributes to the FAD binding site.

This sequence belongs to the DAO family. ThiO subfamily. As to quaternary structure, homotetramer. It depends on FAD as a cofactor.

The catalysed reaction is glycine + O2 + H2O = glyoxylate + H2O2 + NH4(+). It catalyses the reaction glyphosate + O2 + H2O = aminomethylphosphonate + glyoxylate + H2O2 + H(+). It carries out the reaction N-ethylglycine + O2 + H2O = ethylamine + glyoxylate + H2O2. The enzyme catalyses sarcosine + O2 + H2O = methylamine + glyoxylate + H2O2. The catalysed reaction is D-alanine + O2 + H2O = pyruvate + H2O2 + NH4(+). Its pathway is cofactor biosynthesis; thiamine diphosphate biosynthesis. Functionally, catalyzes the FAD-dependent oxidative deamination of glycine, leading to glyoxylate, ammonia and hydrogen peroxide. Is also able to act on various amines and D-amino acids to yield the corresponding alpha-keto acids, ammonia/amine, and hydrogen peroxide. Can also oxidize the herbicide glyphosate (N-phosphonomethylglycine), and thus may be involved in the degradation pathway that allows B.licheniformis J33-8 to grow with glyphosate as the sole source of carbon. Is essential for thiamine biosynthesis since the oxidation of glycine catalyzed by ThiO generates the glycine imine intermediate (dehydroglycine) required for the biosynthesis of the thiazole ring of thiamine pyrophosphate. This chain is Glycine oxidase, found in Bacillus licheniformis.